We begin with the raw amino-acid sequence, 377 residues long: Glutamate 5-kinase (377 aa).

K20 is an ATP binding site. Substrate is bound by residues S60, D147, and N159. Position 179–180 (179–180) interacts with ATP; it reads SD. In terms of domain architecture, PUA spans 281 to 355; that stretch reads HGQLHLDAGA…GQSTSDLPEF (75 aa).

Belongs to the glutamate 5-kinase family.

It localises to the cytoplasm. The enzyme catalyses L-glutamate + ATP = L-glutamyl 5-phosphate + ADP. It participates in amino-acid biosynthesis; L-proline biosynthesis; L-glutamate 5-semialdehyde from L-glutamate: step 1/2. In terms of biological role, catalyzes the transfer of a phosphate group to glutamate to form L-glutamate 5-phosphate. The polypeptide is Glutamate 5-kinase (Corynebacterium jeikeium (strain K411)).